We begin with the raw amino-acid sequence, 60 residues long: MAQLKVQQKKGVVGIKANQRETLRTLGLKRIGDVVVKEDRPEIRGMVNTVRHLVTVEEVE.

This sequence belongs to the universal ribosomal protein uL30 family. In terms of assembly, part of the 50S ribosomal subunit.

In Nocardioides sp. (strain ATCC BAA-499 / JS614), this protein is Large ribosomal subunit protein uL30.